The primary structure comprises 399 residues: Tryptophan synthase beta chain (399 aa).

Position 90 is an N6-(pyridoxal phosphate)lysine (lysine 90).

This sequence belongs to the TrpB family. As to quaternary structure, tetramer of two alpha and two beta chains. Pyridoxal 5'-phosphate is required as a cofactor.

It catalyses the reaction (1S,2R)-1-C-(indol-3-yl)glycerol 3-phosphate + L-serine = D-glyceraldehyde 3-phosphate + L-tryptophan + H2O. Its pathway is amino-acid biosynthesis; L-tryptophan biosynthesis; L-tryptophan from chorismate: step 5/5. The beta subunit is responsible for the synthesis of L-tryptophan from indole and L-serine. This Lactiplantibacillus plantarum (strain ATCC BAA-793 / NCIMB 8826 / WCFS1) (Lactobacillus plantarum) protein is Tryptophan synthase beta chain.